A 130-amino-acid chain; its full sequence is Large ribosomal subunit protein bL19 (130 aa).

It belongs to the bacterial ribosomal protein bL19 family.

Its function is as follows. This protein is located at the 30S-50S ribosomal subunit interface and may play a role in the structure and function of the aminoacyl-tRNA binding site. The sequence is that of Large ribosomal subunit protein bL19 from Burkholderia orbicola (strain MC0-3).